A 1233-amino-acid chain; its full sequence is Structural maintenance of chromosomes protein 1A (1233 aa).

32–39 (GPNGSGKS) lines the ATP pocket. 2 coiled-coil regions span residues 104–124 (EYKI…LEKL) and 163–503 (ELAQ…KAEI). The segment covering 284–293 (IKEKDSELNQ) has biased composition (basic and acidic residues). Disordered regions lie at residues 284-308 (IKEK…TSHK) and 348-369 (QEFE…TLEE). 2 positions are modified to phosphoserine: serine 358 and serine 360. One can recognise an SMC hinge domain in the interval 515–629 (VYGRLIDLCQ…DNVEDARRIA (115 aa)). Residues lysine 648 and lysine 713 each carry the N6-acetyllysine modification. The stretch at 660–935 (KAKARRWDEK…RHNLLQACKM (276 aa)) forms a coiled coil. The disordered stretch occupies residues 947 to 968 (MDDISQEEGSSQGEDSVSGSQR). Residues 953–967 (EEGSSQGEDSVSGSQ) show a composition bias toward low complexity. Serine 957, serine 962, serine 966, and serine 970 each carry phosphoserine. The stretch at 991-1068 (KDAQAEEEIK…FEQIKKERFD (78 aa)) forms a coiled coil. Lysine 1037 carries the post-translational modification N6-acetyllysine.

This sequence belongs to the SMC family. SMC1 subfamily. In terms of assembly, forms a heterodimer with SMC3 in cohesin complexes. Cohesin complexes are composed of the SMC1 (SMC1A or meiosis-specific SMC1B) and SMC3 heterodimer attached via their SMC hinge domain, RAD21 which link them, and one STAG protein (STAG1, STAG2 or meiosis-specific STAG3), which interacts with RAD21. In germ cell cohesin complexes, SMC1A is mutually exclusive with SMC1B. Found in a complex with CDCA5, SMC3 and RAD21, PDS5A/SCC-112 and PDS5B/APRIN. Interacts with NDC80, SYCP2, STAG3, BRCA1 and BRAT1. The cohesin complex interacts with the cohesin loading complex subunits NIPBL/Scc2 (via HEAT repeats) and MAU2/Scc4. NIPBL directly contacts all members of the complex, RAD21, SMC1A/B, SMC3 and STAG1. Interacts with RPGR. Found in a complex containing POLE and SMC3. Phosphorylated upon ionizing radiation or DNA methylation. Phosphorylation of Ser-957 and Ser-966 activates it and is required for S-phase checkpoint activation. Post-translationally, ubiquitinated by the DCX(DCAF15) complex, leading to its degradation.

It is found in the nucleus. The protein localises to the chromosome. Its subcellular location is the centromere. Its function is as follows. Involved in chromosome cohesion during cell cycle and in DNA repair. Involved in DNA repair via its interaction with BRCA1 and its related phosphorylation by ATM, and works as a downstream effector in the ATM/NBS1 branch of S-phase checkpoint. Central component of cohesin complex. The cohesin complex is required for the cohesion of sister chromatids after DNA replication. The cohesin complex apparently forms a large proteinaceous ring within which sister chromatids can be trapped. At anaphase, the complex is cleaved and dissociates from chromatin, allowing sister chromatids to segregate. The cohesin complex may also play a role in spindle pole assembly during mitosis. Involved in DNA repair via its interaction with BRCA1 and its related phosphorylation by ATM, or via its phosphorylation by ATR. Works as a downstream effector both in the ATM/NBS1 branch and in the ATR/MSH2 branch of S-phase checkpoint. The polypeptide is Structural maintenance of chromosomes protein 1A (SMC1A) (Bos taurus (Bovine)).